A 585-amino-acid polypeptide reads, in one-letter code: Arginine--tRNA ligase (585 aa).

Positions alanine 131–histidine 141 match the 'HIGH' region motif.

It belongs to the class-I aminoacyl-tRNA synthetase family. In terms of assembly, monomer.

It localises to the cytoplasm. It carries out the reaction tRNA(Arg) + L-arginine + ATP = L-arginyl-tRNA(Arg) + AMP + diphosphate. The polypeptide is Arginine--tRNA ligase (Rhizobium etli (strain ATCC 51251 / DSM 11541 / JCM 21823 / NBRC 15573 / CFN 42)).